The following is a 470-amino-acid chain: Fumarate hydratase class II (470 aa).

Substrate-binding positions include 99-101 (SGT), 129-132 (HPND), 139-141 (SSN), and Thr187. His188 functions as the Proton donor/acceptor in the catalytic mechanism. Ser318 is an active-site residue. Substrate is bound by residues Ser319 and 324 to 326 (KIN).

This sequence belongs to the class-II fumarase/aspartase family. Fumarase subfamily. Homotetramer.

It is found in the cytoplasm. The catalysed reaction is (S)-malate = fumarate + H2O. It participates in carbohydrate metabolism; tricarboxylic acid cycle; (S)-malate from fumarate: step 1/1. Its function is as follows. Involved in the TCA cycle. Catalyzes the stereospecific interconversion of fumarate to L-malate. This is Fumarate hydratase class II from Halobacterium salinarum (strain ATCC 700922 / JCM 11081 / NRC-1) (Halobacterium halobium).